We begin with the raw amino-acid sequence, 300 residues long: tRNA dimethylallyltransferase (300 aa).

Residue 11–18 coordinates ATP; sequence GPTAVGKS. 13–18 is a binding site for substrate; it reads TAVGKS. The interaction with substrate tRNA stretch occupies residues 35–38; sequence DSIQ.

Belongs to the IPP transferase family. As to quaternary structure, monomer. It depends on Mg(2+) as a cofactor.

The enzyme catalyses adenosine(37) in tRNA + dimethylallyl diphosphate = N(6)-dimethylallyladenosine(37) in tRNA + diphosphate. Its function is as follows. Catalyzes the transfer of a dimethylallyl group onto the adenine at position 37 in tRNAs that read codons beginning with uridine, leading to the formation of N6-(dimethylallyl)adenosine (i(6)A). In Borreliella afzelii (strain PKo) (Borrelia afzelii), this protein is tRNA dimethylallyltransferase.